Consider the following 531-residue polypeptide: Importin subunit alpha-2 (531 aa).

Residues 1–10 (MTLTETSLSH) show a composition bias toward polar residues. The segment at 1-88 (MTLTETSLSH…ISHQQSSTRL (88 aa)) is disordered. The IBB domain occupies 5–67 (ETSLSHNAEE…RNIVDVDEGG (63 aa)). Composition is skewed to basic and acidic residues over residues 11–20 (NAEEGKDEGG) and 29–50 (TKHE…KQKG). The span at 62–75 (DVDEGGNSESELEE) shows a compositional bias: acidic residues. ARM repeat units follow at residues 122-161 (NPPI…NIVS), 164-203 (TEQT…NIAG), 250-290 (KNPH…YLTD), 293-331 (DEQI…NVAT), 334-374 (DSLT…NIIA), 377-416 (QKQI…NLAQ), and 420-459 (NRQV…TLML). Residues 511–531 (DDAGEKESHENADPQDNKWSF) form a disordered region. A compositionally biased stretch (basic and acidic residues) spans 515–531 (EKESHENADPQDNKWSF).

This sequence belongs to the importin alpha family. Forms a complex with an importin beta subunit. Interacts with akir-1. As to expression, germline tissues. Expressed exclusively in germ line cells from the early embryonic through adult stages.

Its subcellular location is the cytoplasm. It is found in the nucleus. The protein localises to the nucleus envelope. In terms of biological role, nuclear transport receptor that mediates nuclear import of proteins, and which is involved in sister chromatid cohesion. Binds specifically and directly to substrates containing either a simple or bipartite nuclear localization signals (NLS) motif. Promotes docking of import substrates to the nuclear envelope. Together with akir-1 adapter, required for the import and load of cohesin complex proteins in meiotic nuclei. The protein is Importin subunit alpha-2 of Caenorhabditis elegans.